The sequence spans 643 residues: Phosphomethylpyrimidine synthase (643 aa).

Substrate is bound by residues asparagine 221, methionine 250, tyrosine 279, histidine 315, 335–337 (SRG), 376–379 (DGLR), and glutamate 415. Zn(2+) is bound at residue histidine 419. Position 442 (tyrosine 442) interacts with substrate. Histidine 483 provides a ligand contact to Zn(2+). The [4Fe-4S] cluster site is built by cysteine 563, cysteine 566, and cysteine 571.

The protein belongs to the ThiC family. Homodimer. Requires [4Fe-4S] cluster as cofactor.

The enzyme catalyses 5-amino-1-(5-phospho-beta-D-ribosyl)imidazole + S-adenosyl-L-methionine = 4-amino-2-methyl-5-(phosphooxymethyl)pyrimidine + CO + 5'-deoxyadenosine + formate + L-methionine + 3 H(+). The protein operates within cofactor biosynthesis; thiamine diphosphate biosynthesis. Functionally, catalyzes the synthesis of the hydroxymethylpyrimidine phosphate (HMP-P) moiety of thiamine from aminoimidazole ribotide (AIR) in a radical S-adenosyl-L-methionine (SAM)-dependent reaction. The chain is Phosphomethylpyrimidine synthase from Nitrobacter hamburgensis (strain DSM 10229 / NCIMB 13809 / X14).